Here is a 460-residue protein sequence, read N- to C-terminus: Cysteine--tRNA ligase (460 aa).

Cys29 lines the Zn(2+) pocket. A 'HIGH' region motif is present at residues 31 to 41 (MTVYDYMHIGH). The Zn(2+) site is built by Cys210, His235, and Glu239. The 'KMSKS' region signature appears at 267-271 (KMSKS). ATP is bound at residue Lys270.

The protein belongs to the class-I aminoacyl-tRNA synthetase family. In terms of assembly, monomer. It depends on Zn(2+) as a cofactor.

It localises to the cytoplasm. The enzyme catalyses tRNA(Cys) + L-cysteine + ATP = L-cysteinyl-tRNA(Cys) + AMP + diphosphate. The chain is Cysteine--tRNA ligase from Coxiella burnetii (strain RSA 493 / Nine Mile phase I).